A 313-amino-acid polypeptide reads, in one-letter code: Olfactory receptor 1D2 (313 aa).

The Extracellular portion of the chain corresponds to 1–25 (MDGGNQSEGSEFLLLGMSESPEQQR). A glycan (N-linked (GlcNAc...) asparagine) is linked at asparagine 5. The chain crosses the membrane as a helical span at residues 26 to 49 (ILFWMFLSMYLVTVLGNVLIILAI). The Cytoplasmic segment spans residues 50–57 (SSDSRLHT). The helical transmembrane segment at 58–79 (PMYFFLANLSFTDLFFVTNTIP) threads the bilayer. The Extracellular portion of the chain corresponds to 80–100 (KMLVNLQSQDKAISYAGCLTQ). Cysteine 97 and cysteine 189 are joined by a disulfide. The chain crosses the membrane as a helical span at residues 101-120 (LYFLLSLVTLDNLILAVMAY). Residues 121–139 (DRYVAICCPLHYVTAMSPR) are Cytoplasmic-facing. A helical membrane pass occupies residues 140 to 158 (LCILLLSLCWVFSVLYGLI). Residues 159–196 (HTLLMTRVTFCGSRKIHYLFCEMYFLLRLACSNIQINH) are Extracellular-facing. Asparagine 195 is a glycosylation site (N-linked (GlcNAc...) asparagine). The chain crosses the membrane as a helical span at residues 197–219 (TVLXATGCFIFLIPLGFMIXSYA). The Cytoplasmic portion of the chain corresponds to 220 to 236 (RIVRAILRIPSATGKYK). The helical transmembrane segment at 237-259 (AFSTCASHLAVVSLFYGTLGMVY) threads the bilayer. At 260–271 (LQPLQTYSTKDS) the chain is on the extracellular side. The helical transmembrane segment at 272–291 (VATVMYAVVTPMMNPFIYSL) threads the bilayer. The Cytoplasmic segment spans residues 292–313 (RNKDIHGALGRLLQGKAFQKLT).

This sequence belongs to the G-protein coupled receptor 1 family.

It localises to the cell membrane. Its function is as follows. Odorant receptor. The polypeptide is Olfactory receptor 1D2 (OR1D2) (Pongo pygmaeus (Bornean orangutan)).